Consider the following 40-residue polypeptide: Photosystem II reaction center protein L (40 aa).

Residues 19–39 traverse the membrane as a helical segment; the sequence is SLYWGLLLIFVLAVLFSNYFF.

Belongs to the PsbL family. PSII is composed of 1 copy each of membrane proteins PsbA, PsbB, PsbC, PsbD, PsbE, PsbF, PsbH, PsbI, PsbJ, PsbK, PsbL, PsbM, PsbT, PsbX, PsbY, PsbZ, Psb30/Ycf12, at least 3 peripheral proteins of the oxygen-evolving complex and a large number of cofactors. It forms dimeric complexes.

It localises to the plastid. Its subcellular location is the chloroplast thylakoid membrane. Its function is as follows. One of the components of the core complex of photosystem II (PSII). PSII is a light-driven water:plastoquinone oxidoreductase that uses light energy to abstract electrons from H(2)O, generating O(2) and a proton gradient subsequently used for ATP formation. It consists of a core antenna complex that captures photons, and an electron transfer chain that converts photonic excitation into a charge separation. This subunit is found at the monomer-monomer interface and is required for correct PSII assembly and/or dimerization. The polypeptide is Photosystem II reaction center protein L (Nandina domestica (Heavenly bamboo)).